The following is a 466-amino-acid chain: Glutamate decarboxylase beta (466 aa).

Substrate contacts are provided by threonine 62 and asparagine 83. Pyridoxal 5'-phosphate is bound by residues 126–127 (SS), threonine 212, and histidine 275. Lysine 276 carries the N6-(pyridoxal phosphate)lysine modification. Lysine 446, lysine 453, and lysine 464 each carry N6-acetyllysine.

This sequence belongs to the group II decarboxylase family. In terms of assembly, homohexamer composed of three dimers. Pyridoxal 5'-phosphate serves as cofactor.

It carries out the reaction L-glutamate + H(+) = 4-aminobutanoate + CO2. Its function is as follows. Converts glutamate to gamma-aminobutyrate (GABA), consuming one intracellular proton in the reaction. The gad system helps to maintain a near-neutral intracellular pH when cells are exposed to extremely acidic conditions. The ability to survive transit through the acidic conditions of the stomach is essential for successful colonization of the mammalian host by commensal and pathogenic bacteria. This chain is Glutamate decarboxylase beta (gadB), found in Shigella flexneri.